The primary structure comprises 425 residues: Serine--tRNA ligase (425 aa).

230-232 (TAE) is an L-serine binding site. An ATP-binding site is contributed by 261-263 (RSE). Residue Glu-284 participates in L-serine binding. 348–351 (EISS) contributes to the ATP binding site. Ser-384 contributes to the L-serine binding site.

The protein belongs to the class-II aminoacyl-tRNA synthetase family. Type-1 seryl-tRNA synthetase subfamily. In terms of assembly, homodimer. The tRNA molecule binds across the dimer.

It localises to the cytoplasm. The catalysed reaction is tRNA(Ser) + L-serine + ATP = L-seryl-tRNA(Ser) + AMP + diphosphate + H(+). It catalyses the reaction tRNA(Sec) + L-serine + ATP = L-seryl-tRNA(Sec) + AMP + diphosphate + H(+). Its pathway is aminoacyl-tRNA biosynthesis; selenocysteinyl-tRNA(Sec) biosynthesis; L-seryl-tRNA(Sec) from L-serine and tRNA(Sec): step 1/1. Functionally, catalyzes the attachment of serine to tRNA(Ser). Is also able to aminoacylate tRNA(Sec) with serine, to form the misacylated tRNA L-seryl-tRNA(Sec), which will be further converted into selenocysteinyl-tRNA(Sec). This chain is Serine--tRNA ligase, found in Streptococcus pyogenes serotype M2 (strain MGAS10270).